A 300-amino-acid polypeptide reads, in one-letter code: 7-methylguanosine phosphate-specific 5'-nucleotidase (300 aa).

Aspartate 41 serves as the catalytic Nucleophile. Residues aspartate 41 and aspartate 43 each contribute to the Mg(2+) site. Aspartate 43 acts as the Proton donor in catalysis. CMP is bound at residue glutamate 88. Glutamate 88 provides a ligand contact to N(7)-methyl-GMP. Substrate is bound by residues 156–157 and lysine 205; that span reads SA. Residue aspartate 230 coordinates Mg(2+). The residue at position 256 (lysine 256) is an N6-acetyllysine.

This sequence belongs to the pyrimidine 5'-nucleotidase family. In terms of assembly, monomer.

It localises to the cytoplasm. The enzyme catalyses N(7)-methyl-GMP + H2O = N(7)-methylguanosine + phosphate. It carries out the reaction CMP + H2O = cytidine + phosphate. The catalysed reaction is a ribonucleoside 5'-phosphate + H2O = a ribonucleoside + phosphate. Functionally, specifically hydrolyzes 7-methylguanosine monophosphate (m(7)GMP) to 7-methylguanosine and inorganic phosphate. The specific activity for m(7)GMP may protect cells against undesired salvage of m(7)GMP and its incorporation into nucleic acids. Also has weak activity for CMP. UMP and purine nucleotides are poor substrates. This is 7-methylguanosine phosphate-specific 5'-nucleotidase (NT5C3B) from Homo sapiens (Human).